Consider the following 600-residue polypeptide: CDK5RAP1-like protein (600 aa).

The segment at 45–66 is disordered; it reads LSSAAHPPPPPPRRLARSGPSR. The MTTase N-terminal domain maps to 93–222; sequence GRIYHETYGC…LPRLLQEVDY (130 aa). 6 residues coordinate [4Fe-4S] cluster: Cys102, Cys139, Cys185, Cys260, Cys264, and Cys267. The Radical SAM core domain occupies 246-501; it reads SDNSVTAFVS…ISTFRETTAK (256 aa). In terms of domain architecture, TRAM spans 504–580; the sequence is DSQVGTVQLV…TASLSGDVIA (77 aa).

Belongs to the methylthiotransferase family. MiaB subfamily. [4Fe-4S] cluster is required as a cofactor.

Its function is as follows. Potential regulator of CDK5 activity. This Oryza sativa subsp. japonica (Rice) protein is CDK5RAP1-like protein.